The following is a 243-amino-acid chain: Venom nerve growth factor 1 (243 aa).

Residues Met1 to Ala18 form the signal peptide. The propeptide occupies Ala19 to Arg125. Positions Gly47–Asp66 are enriched in basic and acidic residues. The interval Gly47–Leu69 is disordered. Cystine bridges form between Cys139-Cys204, Cys182-Cys232, and Cys192-Cys234. Asn148 carries N-linked (GlcNAc...) asparagine glycosylation.

Belongs to the NGF-beta family. Homodimer; non-covalently linked. Expressed by the venom gland.

It is found in the secreted. Its function is as follows. Nerve growth factor is important for the development and maintenance of the sympathetic and sensory nervous systems. It stimulates division and differentiation of sympathetic and embryonic sensory neurons as well as basal forebrain cholinergic neurons in the brain. Its relevance in the snake venom is not clear. However, it has been shown to inhibit metalloproteinase-dependent proteolysis of platelet glycoprotein Ib alpha, suggesting a metalloproteinase inhibition to prevent metalloprotease autodigestion and/or protection against prey proteases. Binds a lipid between the two protein chains in the homodimer. The lipid-bound form promotes histamine relase from mouse mast cells, contrary to the lipid-free form. This is Venom nerve growth factor 1 from Oxyuranus microlepidotus (Inland taipan).